We begin with the raw amino-acid sequence, 716 residues long: Polyribonucleotide nucleotidyltransferase (716 aa).

2 residues coordinate Mg(2+): Asp495 and Asp501. Residues 562–621 (PRLFRIQINPEQIGLVIGPGGKTIRSITEQTGAKIDIEDTGAVTISAVDADSALRAKSII) enclose the KH domain. In terms of domain architecture, S1 motif spans 631 to 699 (GDVYIGKVTR…QKGRVNLTRK (69 aa)).

It belongs to the polyribonucleotide nucleotidyltransferase family. Requires Mg(2+) as cofactor.

The protein resides in the cytoplasm. The enzyme catalyses RNA(n+1) + phosphate = RNA(n) + a ribonucleoside 5'-diphosphate. In terms of biological role, involved in mRNA degradation. Catalyzes the phosphorolysis of single-stranded polyribonucleotides processively in the 3'- to 5'-direction. The chain is Polyribonucleotide nucleotidyltransferase from Synechococcus sp. (strain ATCC 27144 / PCC 6301 / SAUG 1402/1) (Anacystis nidulans).